The sequence spans 461 residues: Photosystem II CP43 reaction center protein (461 aa).

The propeptide occupies 1–2; that stretch reads ME. Residue Thr3 is modified to N-acetylthreonine. Residue Thr3 is modified to Phosphothreonine. A run of 5 helical transmembrane segments spans residues 57 to 81, 122 to 143, 166 to 188, 243 to 263, and 279 to 300; these read LFEV…PHIA, LIGP…KDKN, KAMY…RIIT, TPWP…LSYS, and WFNN…ASQA. Glu355 is a [CaMn4O5] cluster binding site. A helical membrane pass occupies residues 435–459; the sequence is RARAAAAGFEKGIDRVDEPVLSMRP.

This sequence belongs to the PsbB/PsbC family. PsbC subfamily. As to quaternary structure, PSII is composed of 1 copy each of membrane proteins PsbA, PsbB, PsbC, PsbD, PsbE, PsbF, PsbH, PsbI, PsbJ, PsbK, PsbL, PsbM, PsbT, PsbX, PsbY, PsbZ, Psb30/Ycf12, at least 3 peripheral proteins of the oxygen-evolving complex and a large number of cofactors. It forms dimeric complexes. Requires Binds multiple chlorophylls and provides some of the ligands for the Ca-4Mn-5O cluster of the oxygen-evolving complex. It may also provide a ligand for a Cl- that is required for oxygen evolution. PSII binds additional chlorophylls, carotenoids and specific lipids. as cofactor.

Its subcellular location is the plastid. The protein resides in the chloroplast thylakoid membrane. One of the components of the core complex of photosystem II (PSII). It binds chlorophyll and helps catalyze the primary light-induced photochemical processes of PSII. PSII is a light-driven water:plastoquinone oxidoreductase, using light energy to abstract electrons from H(2)O, generating O(2) and a proton gradient subsequently used for ATP formation. The polypeptide is Photosystem II CP43 reaction center protein (Chlamydomonas moewusii (Chlamydomonas eugametos)).